A 313-amino-acid chain; its full sequence is Porphobilinogen deaminase (313 aa).

An S-(dipyrrolylmethanemethyl)cysteine modification is found at Cys241.

Belongs to the HMBS family. Monomer. The cofactor is dipyrromethane.

It catalyses the reaction 4 porphobilinogen + H2O = hydroxymethylbilane + 4 NH4(+). Its pathway is porphyrin-containing compound metabolism; protoporphyrin-IX biosynthesis; coproporphyrinogen-III from 5-aminolevulinate: step 2/4. Its function is as follows. Tetrapolymerization of the monopyrrole PBG into the hydroxymethylbilane pre-uroporphyrinogen in several discrete steps. The protein is Porphobilinogen deaminase of Bacillus velezensis (strain DSM 23117 / BGSC 10A6 / LMG 26770 / FZB42) (Bacillus amyloliquefaciens subsp. plantarum).